Here is a 198-residue protein sequence, read N- to C-terminus: Imidazoleglycerol-phosphate dehydratase (198 aa).

The protein belongs to the imidazoleglycerol-phosphate dehydratase family.

Its subcellular location is the cytoplasm. The catalysed reaction is D-erythro-1-(imidazol-4-yl)glycerol 3-phosphate = 3-(imidazol-4-yl)-2-oxopropyl phosphate + H2O. It functions in the pathway amino-acid biosynthesis; L-histidine biosynthesis; L-histidine from 5-phospho-alpha-D-ribose 1-diphosphate: step 6/9. The chain is Imidazoleglycerol-phosphate dehydratase from Gluconacetobacter diazotrophicus (strain ATCC 49037 / DSM 5601 / CCUG 37298 / CIP 103539 / LMG 7603 / PAl5).